A 79-amino-acid chain; its full sequence is uncharacterized protein (79 aa).

Residues 1-19 (MKYVALAFVLSLVILQISA) form the signal peptide. The segment at 52–71 (RGRKSRTQSGRNQGKSTSDS) is disordered. Residues 58 to 71 (TQSGRNQGKSTSDS) are compositionally biased toward polar residues.

As to expression, nacreous layer of shell (at protein level). Expressed primarily in the mantle with highest level in the mantle pallium and lower level in the mantle edge.

It is found in the secreted. This is an uncharacterized protein from Margaritifera margaritifera (Freshwater pearl mussel).